Consider the following 541-residue polypeptide: Cytochrome bc1 complex cytochrome b subunit (541 aa).

The helical transmembrane segment at 36–56 threads the bilayer; it reads FLLGEIALYSFIILILTGVYL. Positions 105 and 119 each coordinate heme. 3 helical membrane passes run 109–129, 137–157, and 169–189; these read ALMF…TGAF, WVIG…GYSL, and IMSA…WMIF. Residues His206 and His221 each contribute to the heme site. The next 5 membrane-spanning stretches (helical) occupy residues 207-227, 256-276, 325-345, 371-391, and 408-428; these read VLII…LVWY, SVAF…VTTI, VFWV…YPWI, LGVM…NDIW, and IGLI…CIGL.

It belongs to the cytochrome b family. In terms of assembly, the cytochrome bc1 complex is composed of a cytochrome b (QcrB), the Rieske protein iron-sulfur (QcrA) and a diheme cytochrome c (QcrC) subunit. Heme serves as cofactor.

It localises to the cell membrane. It catalyses the reaction a quinol + 2 Fe(III)-[cytochrome c](out) = a quinone + 2 Fe(II)-[cytochrome c](out) + 2 H(+)(out). Functionally, cytochrome b subunit of the cytochrome bc1 complex, an essential component of the respiratory electron transport chain required for ATP synthesis. The bc1 complex catalyzes the oxidation of menaquinol and the reduction of cytochrome c in the respiratory chain. The bc1 complex operates through a Q-cycle mechanism that couples electron transfer to generation of the proton gradient that drives ATP synthesis. This Corynebacterium efficiens (strain DSM 44549 / YS-314 / AJ 12310 / JCM 11189 / NBRC 100395) protein is Cytochrome bc1 complex cytochrome b subunit (qcrB).